The chain runs to 344 residues: MSTSLSYRDAGVGIDAGDQLVEKIKPFAKRTMRPEVLGDLGGFGALVEIGKKYQNPVLVSGTDGVGTKLKLAFDWDKHDTVGIDLVAMSVNDILVQGAEPLFFLDYFACGKLDVPRATDVIKGIAQGCEESGCALIGGETAEMPGMYPVGEYDLAGFAVGVVEKENVITGLSIGAGDVVLGLASNGAHSNGYSLIRKIIERDNPDLDAEFDNGKTLREAVIAPTRLYVKPILAALEKFTIKGMAHITGGGITENVPRVLPKNTVAQIDAESWELPKLFQWLQKAGNVETQEMYRTFNCGIGMVVIVAAEDADAVRSFLSGQGETVYRLGCIRERQGNEHQTQVA.

Belongs to the AIR synthase family.

The protein localises to the cytoplasm. The catalysed reaction is 2-formamido-N(1)-(5-O-phospho-beta-D-ribosyl)acetamidine + ATP = 5-amino-1-(5-phospho-beta-D-ribosyl)imidazole + ADP + phosphate + H(+). It functions in the pathway purine metabolism; IMP biosynthesis via de novo pathway; 5-amino-1-(5-phospho-D-ribosyl)imidazole from N(2)-formyl-N(1)-(5-phospho-D-ribosyl)glycinamide: step 2/2. This Neisseria gonorrhoeae (strain ATCC 700825 / FA 1090) protein is Phosphoribosylformylglycinamidine cyclo-ligase.